We begin with the raw amino-acid sequence, 241 residues long: Proteasome subunit beta type-6 (241 aa).

Residues 1-19 constitute a propeptide that is removed on maturation; that stretch reads MATIASEYSSEASNTPIEH.

Belongs to the peptidase T1B family. The 26S proteasome consists of a 20S proteasome core and two 19S regulatory subunits. The 20S proteasome core is composed of 28 subunits that are arranged in four stacked rings, resulting in a barrel-shaped structure. The two end rings are each formed by seven alpha subunits, and the two central rings are each formed by seven beta subunits. The catalytic chamber with the active sites is on the inside of the barrel.

The protein resides in the cytoplasm. Its subcellular location is the nucleus. Its function is as follows. Non-catalytic component of the proteasome which degrades poly-ubiquitinated proteins in the cytoplasm and in the nucleus. It is essential for the regulated turnover of proteins and for the removal of misfolded proteins. The proteasome is a multicatalytic proteinase complex that is characterized by its ability to cleave peptides with Arg, Phe, Tyr, Leu, and Glu adjacent to the leaving group at neutral or slightly basic pH. It has an ATP-dependent proteolytic activity. This is Proteasome subunit beta type-6 (PRE7) from Saccharomyces cerevisiae (strain ATCC 204508 / S288c) (Baker's yeast).